Here is a 93-residue protein sequence, read N- to C-terminus: Large ribosomal subunit protein bL27 (93 aa).

This sequence belongs to the bacterial ribosomal protein bL27 family.

The polypeptide is Large ribosomal subunit protein bL27 (Trichormus variabilis (strain ATCC 29413 / PCC 7937) (Anabaena variabilis)).